Here is a 193-residue protein sequence, read N- to C-terminus: Interferon type A3 (193 aa).

Residues 1 to 31 (MAVPASPQHPRGYGILLLTLLLKALATTASA) form the signal peptide. Intrachain disulfides connect cysteine 32–cysteine 129, cysteine 61–cysteine 155, and cysteine 68–cysteine 168. N-linked (GlcNAc...) asparagine glycosylation is found at asparagine 65, asparagine 71, asparagine 108, and asparagine 186.

This sequence belongs to the alpha/beta interferon family.

It localises to the secreted. Has antiviral activities. This Gallus gallus (Chicken) protein is Interferon type A3 (IFNA3).